The sequence spans 552 residues: Arginine--tRNA ligase (552 aa).

The 'HIGH' region signature appears at 129 to 139; sequence ANPTGPVTLAS.

This sequence belongs to the class-I aminoacyl-tRNA synthetase family. Monomer.

The protein resides in the cytoplasm. The enzyme catalyses tRNA(Arg) + L-arginine + ATP = L-arginyl-tRNA(Arg) + AMP + diphosphate. The polypeptide is Arginine--tRNA ligase (Frankia alni (strain DSM 45986 / CECT 9034 / ACN14a)).